Here is a 356-residue protein sequence, read N- to C-terminus: Ion-translocating oxidoreductase complex subunit D (356 aa).

Transmembrane regions (helical) follow at residues 20–40 (LMLL…WFFG), 42–62 (GVLV…ALAI), 68–88 (PVGF…IGVS), and 117–137 (GFNP…SFPV). An FMN phosphoryl threonine modification is found at Thr-177. 5 consecutive transmembrane segments (helical) span residues 205–225 (WASA…LYLL), 229–249 (VYTW…AALF), 259–279 (GSPL…FIVT), 292–312 (VIYG…GSSY), and 315–335 (GVAF…YYTT).

Belongs to the NqrB/RnfD family. In terms of assembly, the complex is composed of six subunits: RnfA, RnfB, RnfC, RnfD, RnfE and RnfG. It depends on FMN as a cofactor.

Its subcellular location is the cell inner membrane. Its function is as follows. Part of a membrane-bound complex that couples electron transfer with translocation of ions across the membrane. In Cellvibrio japonicus (strain Ueda107) (Pseudomonas fluorescens subsp. cellulosa), this protein is Ion-translocating oxidoreductase complex subunit D.